Here is a 314-residue protein sequence, read N- to C-terminus: Periplasmic [NiFe] hydrogenase small subunit (314 aa).

Residues 1-49 constitute a signal peptide (tat-type signal); the sequence is MNFSVGLGRDDAEKRLVQNGVSRRDFMKFCATVAAAMGMGPAFAPKVAE. The [4Fe-4S] cluster site is built by C67, C70, C164, C197, H234, C237, C262, and C268. Positions 277, 295, and 298 each coordinate [3Fe-4S] cluster.

Belongs to the [NiFe]/[NiFeSe] hydrogenase small subunit family. As to quaternary structure, heterodimer of a large and a small subunit. Requires [4Fe-4S] cluster as cofactor. [3Fe-4S] cluster serves as cofactor. In terms of processing, predicted to be exported by the Tat system. The position of the signal peptide cleavage has been experimentally proven.

The protein resides in the periplasm. The enzyme catalyses 2 Fe(III)-[cytochrome c3] + H2 = 2 Fe(II)-[cytochrome c3] + 2 H(+). In terms of biological role, involved in hydrogen uptake for the anaerobic reduction of sulfate to hydrogen sulfide in an electron transport chain. Cytochrome c3 is the physiological electron acceptor. In Solidesulfovibrio fructosivorans (Desulfovibrio fructosivorans), this protein is Periplasmic [NiFe] hydrogenase small subunit (hydA).